A 474-amino-acid chain; its full sequence is Siroheme synthase (474 aa).

Residues 1–202 (MEYLPIFIDL…GRPKEANKVL (202 aa)) are precorrin-2 dehydrogenase /sirohydrochlorin ferrochelatase. NAD(+)-binding positions include 22–23 (AV) and 41–42 (PA). Residue serine 126 is modified to Phosphoserine. Positions 218 to 474 (GHVTLVGAGP…YLINSIINLI (257 aa)) are uroporphyrinogen-III C-methyltransferase. Proline 227 is a binding site for S-adenosyl-L-methionine. Aspartate 250 functions as the Proton acceptor in the catalytic mechanism. The active-site Proton donor is lysine 272. S-adenosyl-L-methionine contacts are provided by residues 303 to 305 (GGD), isoleucine 308, 333 to 334 (TA), methionine 385, and glycine 414.

This sequence in the N-terminal section; belongs to the precorrin-2 dehydrogenase / sirohydrochlorin ferrochelatase family. In the C-terminal section; belongs to the precorrin methyltransferase family.

The catalysed reaction is uroporphyrinogen III + 2 S-adenosyl-L-methionine = precorrin-2 + 2 S-adenosyl-L-homocysteine + H(+). It catalyses the reaction precorrin-2 + NAD(+) = sirohydrochlorin + NADH + 2 H(+). It carries out the reaction siroheme + 2 H(+) = sirohydrochlorin + Fe(2+). Its pathway is cofactor biosynthesis; adenosylcobalamin biosynthesis; precorrin-2 from uroporphyrinogen III: step 1/1. The protein operates within cofactor biosynthesis; adenosylcobalamin biosynthesis; sirohydrochlorin from precorrin-2: step 1/1. It functions in the pathway porphyrin-containing compound metabolism; siroheme biosynthesis; precorrin-2 from uroporphyrinogen III: step 1/1. It participates in porphyrin-containing compound metabolism; siroheme biosynthesis; siroheme from sirohydrochlorin: step 1/1. Its pathway is porphyrin-containing compound metabolism; siroheme biosynthesis; sirohydrochlorin from precorrin-2: step 1/1. Functionally, multifunctional enzyme that catalyzes the SAM-dependent methylations of uroporphyrinogen III at position C-2 and C-7 to form precorrin-2 via precorrin-1. Then it catalyzes the NAD-dependent ring dehydrogenation of precorrin-2 to yield sirohydrochlorin. Finally, it catalyzes the ferrochelation of sirohydrochlorin to yield siroheme. The chain is Siroheme synthase from Blochmanniella pennsylvanica (strain BPEN).